Consider the following 474-residue polypeptide: Tumor necrosis factor receptor superfamily member 1B (474 aa).

A signal peptide spans 1 to 22 (MAPAALWVALVFELQLWATGHT). Over 23–258 (VPAQVVLTPY…PIIEQSTKGG (236 aa)) the chain is Extracellular. Residue T30 is glycosylated (O-linked (GalNAc...) threonine). TNFR-Cys repeat units lie at residues 39–77 (ECQISQEYYDRKAQMCCAKCPPGQYVKHFCNKTSDTVCA), 78–119 (DCEA…NRVC), 120–164 (ACEA…VLCK), and 165–203 (ACAPGTFSDTTSSTDVCRPHRICSILAIPGNASTDAVCA). Disulfide bonds link C40-C54, C55-C68, C58-C76, C79-C94, C97-C111, C101-C119, C121-C127, C136-C145, C139-C163, and C166-C181. A glycan (N-linked (GlcNAc...) asparagine) is linked at N69. N-linked (GlcNAc...) asparagine glycosylation occurs at N195. T208 and T224 each carry an O-linked (GalNAc...) threonine glycan. Residues 220-243 (QPEPTRSQPLDQEPGPSQTPSILT) are disordered. The helical transmembrane segment at 259-288 (ISLPIGLIVGVTSLGLLMLGLVNCIILVQR) threads the bilayer. The Cytoplasmic portion of the chain corresponds to 289-474 (KKKPSCLQRD…WFDQIAVKVA (186 aa)). 3 disordered regions span residues 295-314 (LQRDAKVPHVPDEKSQDAVG), 321-378 (LTTA…GSHG), and 397-463 (SQCS…PSQA). The span at 297–310 (RDAKVPHVPDEKSQ) shows a compositional bias: basic and acidic residues. Composition is skewed to low complexity over residues 324–338 (APSSSSSSLESSASA) and 363–378 (ARASSRISDSSHGSHG). Residue S331 is modified to Phosphoserine. A compositionally biased stretch (polar residues) spans 429–442 (ECPSQSPCETTETL).

In terms of assembly, binds to TRAF2. Interacts with BMX. Interacts (activated form) with XPNPEP3.

Its subcellular location is the membrane. Its function is as follows. Receptor with high affinity for TNFSF2/TNF-alpha and approximately 5-fold lower affinity for homotrimeric TNFSF1/lymphotoxin-alpha. The TRAF1/TRAF2 complex recruits the apoptotic suppressors BIRC2 and BIRC3 to TNFRSF1B/TNFR2. The chain is Tumor necrosis factor receptor superfamily member 1B (Tnfrsf1b) from Mus musculus (Mouse).